The following is a 146-amino-acid chain: MSTTADFQQMLRXADLRVTRPRVAVLHAVHXXTRDADTETIIRSVREDLPEVSHQAVYDSLHALTAAALVRRIQPSGSVVSRYESRIGDNHHHVVCRSCGAIADVDCSXAGSAPCLTASEDHGFEIDEAEVIYWGTCPECSVAPSR.

Cys96 and Cys99 together coordinate Zn(2+).

This sequence belongs to the Fur family.

Its subcellular location is the cytoplasm. Acts as a global negative controlling element, employing Fe(2+) as a cofactor to bind the operator of the repressed genes. This chain is Ferric uptake regulation protein 2 (fur2), found in Mycolicibacterium fortuitum (Mycobacterium fortuitum).